A 410-amino-acid polypeptide reads, in one-letter code: ATP phosphoribosyltransferase regulatory subunit (410 aa).

Belongs to the class-II aminoacyl-tRNA synthetase family. HisZ subfamily. In terms of assembly, heteromultimer composed of HisG and HisZ subunits.

The protein localises to the cytoplasm. Its pathway is amino-acid biosynthesis; L-histidine biosynthesis; L-histidine from 5-phospho-alpha-D-ribose 1-diphosphate: step 1/9. In terms of biological role, required for the first step of histidine biosynthesis. May allow the feedback regulation of ATP phosphoribosyltransferase activity by histidine. The chain is ATP phosphoribosyltransferase regulatory subunit from Synechococcus sp. (strain JA-3-3Ab) (Cyanobacteria bacterium Yellowstone A-Prime).